A 296-amino-acid chain; its full sequence is 4-hydroxybenzoate octaprenyltransferase (296 aa).

Transmembrane regions (helical) follow at residues 29-49 (AGWL…AGGF), 52-72 (WHLL…GCCI), 103-123 (LVLG…TNAI), 151-171 (VLGV…LGEV), 176-196 (WLLM…YAMV), 220-240 (VILL…MPYV), 243-263 (ALFT…YTLI), and 275-295 (FRLN…SYAL).

Belongs to the UbiA prenyltransferase family. It depends on Mg(2+) as a cofactor.

Its subcellular location is the cell inner membrane. The catalysed reaction is all-trans-octaprenyl diphosphate + 4-hydroxybenzoate = 4-hydroxy-3-(all-trans-octaprenyl)benzoate + diphosphate. It functions in the pathway cofactor biosynthesis; ubiquinone biosynthesis. Its function is as follows. Catalyzes the prenylation of para-hydroxybenzoate (PHB) with an all-trans polyprenyl group. Mediates the second step in the final reaction sequence of ubiquinone-8 (UQ-8) biosynthesis, which is the condensation of the polyisoprenoid side chain with PHB, generating the first membrane-bound Q intermediate 3-octaprenyl-4-hydroxybenzoate. This is 4-hydroxybenzoate octaprenyltransferase from Albidiferax ferrireducens (strain ATCC BAA-621 / DSM 15236 / T118) (Rhodoferax ferrireducens).